The sequence spans 388 residues: Alcohol dehydrogenase patD (388 aa).

Cys46 is a Zn(2+) binding site. An NAD(+)-binding site is contributed by His47. Residues His67, Glu68, Cys101, Cys104, and Cys112 each coordinate Zn(2+). His67 serves as a coordination point for substrate. NAD(+)-binding positions include 198–203, 295–297, and 320–322; these read VALSRG, SLL, and EEA.

Belongs to the zinc-containing alcohol dehydrogenase family. The cofactor is Zn(2+).

Its subcellular location is the cytoplasm. It is found in the cytosol. The enzyme catalyses neopatulin + NADPH + H(+) = (E)-ascladiol + NADP(+). Its pathway is mycotoxin biosynthesis; patulin biosynthesis. Its function is as follows. Alcohol dehydrogenase; part of the gene cluster that mediates the biosynthesis of patulin, an acetate-derived tetraketide mycotoxin produced by several fungal species that shows antimicrobial properties against several bacteria. PatD catalyzes the conversion of neopatulin into E-ascladiol. The pathway begins with the synthesis of 6-methylsalicylic acid by the polyketide synthase (PKS) patK via condensation of acetate and malonate units. The 6-methylsalicylic acid decarboxylase patG then catalyzes the decarboxylation of 6-methylsalicylic acid to yield m-cresol (also known as 3-methylphenol). These first reactions occur in the cytosol. The intermediate m-cresol is then transported into the endoplasmic reticulum where the cytochrome P450 monooxygenase patH converts it to m-hydroxybenzyl alcohol, which is further converted to gentisyl alcohol by the cytochrome P450 monooxygenase patI. The oxidoreductases patJ and patO further convert gentisyl alcohol to isoepoxydon in the vacuole. PatN catalyzes then the transformation of isoepoxydon into phyllostine. The cluster protein patF is responsible for the conversion from phyllostine to neopatulin whereas the alcohol dehydrogenase patD converts neopatulin to E-ascladiol. The steps between isoepoxydon and E-ascladiol occur in the cytosol, and E-ascladiol is probably secreted to the extracellular space by one of the cluster-specific transporters patC or patM. Finally, the secreted patulin synthase patE catalyzes the conversion of E-ascladiol to patulin. The protein is Alcohol dehydrogenase patD of Aspergillus clavatus (strain ATCC 1007 / CBS 513.65 / DSM 816 / NCTC 3887 / NRRL 1 / QM 1276 / 107).